We begin with the raw amino-acid sequence, 175 residues long: Ribulose bisphosphate carboxylase small subunit, chloroplastic (175 aa).

Residues 1–46 constitute a chloroplast transit peptide; the sequence is MAPTVMASSATSVAPFQGLKSTAGLPVSRRSNGASLGSVSNGGRIR.

Belongs to the RuBisCO small chain family. Heterohexadecamer of 8 large and 8 small subunits.

The protein localises to the plastid. The protein resides in the chloroplast. Its function is as follows. RuBisCO catalyzes two reactions: the carboxylation of D-ribulose 1,5-bisphosphate, the primary event in carbon dioxide fixation, as well as the oxidative fragmentation of the pentose substrate. Both reactions occur simultaneously and in competition at the same active site. Although the small subunit is not catalytic it is essential for maximal activity. This Aegilops tauschii (Tausch's goatgrass) protein is Ribulose bisphosphate carboxylase small subunit, chloroplastic.